The following is a 91-amino-acid chain: MNASNWSVYLILCENSAFYCGISPNPQQRLAIHTAGKGAKYTRVFKPVAMRIVAGGMDKGTALKQEIAVKKLTAAQKRQLWEQAEKMPSET.

Residues 4 to 83 (SNWSVYLILC…AAQKRQLWEQ (80 aa)) form the GIY-YIG domain.

Belongs to the UPF0213 family.

The chain is UPF0213 protein NGO_1598 from Neisseria gonorrhoeae (strain ATCC 700825 / FA 1090).